A 157-amino-acid polypeptide reads, in one-letter code: S-ribosylhomocysteine lyase (157 aa).

Residues His-53, His-57, and Cys-124 each coordinate Fe cation.

The protein belongs to the LuxS family. In terms of assembly, homodimer. It depends on Fe cation as a cofactor.

It catalyses the reaction S-(5-deoxy-D-ribos-5-yl)-L-homocysteine = (S)-4,5-dihydroxypentane-2,3-dione + L-homocysteine. In terms of biological role, involved in the synthesis of autoinducer 2 (AI-2) which is secreted by bacteria and is used to communicate both the cell density and the metabolic potential of the environment. The regulation of gene expression in response to changes in cell density is called quorum sensing. Catalyzes the transformation of S-ribosylhomocysteine (RHC) to homocysteine (HC) and 4,5-dihydroxy-2,3-pentadione (DPD). The chain is S-ribosylhomocysteine lyase from Borrelia garinii subsp. bavariensis (strain ATCC BAA-2496 / DSM 23469 / PBi) (Borreliella bavariensis).